A 59-amino-acid polypeptide reads, in one-letter code: Large ribosomal subunit protein uL30 (59 aa).

It belongs to the universal ribosomal protein uL30 family. Part of the 50S ribosomal subunit.

This Hydrogenobaculum sp. (strain Y04AAS1) protein is Large ribosomal subunit protein uL30.